A 170-amino-acid polypeptide reads, in one-letter code: MTDPMTLPYRPNVGIALFNRDGKLFIARRTDLPGDVWQCPQGGIDEGETPQVAALREMGEEIGTQNARILAERSGWLSYDLPSDLIGKALGGRFRGQTQKWFVMGYEGQDSDIRLDLQDPPEFDAWEWVDPQAVLNRNLGFKKALYAELIPELAALFQAAARDWVRTSRA.

In terms of domain architecture, Nudix hydrolase spans 8–151 (PYRPNVGIAL…KKALYAELIP (144 aa)). Positions 42-63 (GGIDEGETPQVAALREMGEEIG) match the Nudix box motif.

Belongs to the Nudix hydrolase family. RppH subfamily. Requires a divalent metal cation as cofactor.

In terms of biological role, accelerates the degradation of transcripts by removing pyrophosphate from the 5'-end of triphosphorylated RNA, leading to a more labile monophosphorylated state that can stimulate subsequent ribonuclease cleavage. The polypeptide is RNA pyrophosphohydrolase (Gluconobacter oxydans (strain 621H) (Gluconobacter suboxydans)).